Here is a 408-residue protein sequence, read N- to C-terminus: Phosphopentomutase (408 aa).

Residues aspartate 10, aspartate 307, histidine 312, aspartate 348, histidine 349, and histidine 360 each contribute to the Mn(2+) site.

It belongs to the phosphopentomutase family. It depends on Mn(2+) as a cofactor.

It localises to the cytoplasm. It catalyses the reaction 2-deoxy-alpha-D-ribose 1-phosphate = 2-deoxy-D-ribose 5-phosphate. It carries out the reaction alpha-D-ribose 1-phosphate = D-ribose 5-phosphate. It participates in carbohydrate degradation; 2-deoxy-D-ribose 1-phosphate degradation; D-glyceraldehyde 3-phosphate and acetaldehyde from 2-deoxy-alpha-D-ribose 1-phosphate: step 1/2. In terms of biological role, isomerase that catalyzes the conversion of deoxy-ribose 1-phosphate (dRib-1-P) and ribose 1-phosphate (Rib-1-P) to deoxy-ribose 5-phosphate (dRib-5-P) and ribose 5-phosphate (Rib-5-P), respectively. In Buchnera aphidicola subsp. Baizongia pistaciae (strain Bp), this protein is Phosphopentomutase.